Consider the following 168-residue polypeptide: Protein-export protein SecB (168 aa).

The protein belongs to the SecB family. Homotetramer, a dimer of dimers. One homotetramer interacts with 1 SecA dimer.

Its subcellular location is the cytoplasm. Functionally, one of the proteins required for the normal export of preproteins out of the cell cytoplasm. It is a molecular chaperone that binds to a subset of precursor proteins, maintaining them in a translocation-competent state. It also specifically binds to its receptor SecA. This chain is Protein-export protein SecB, found in Glaesserella parasuis serovar 5 (strain SH0165) (Haemophilus parasuis).